Here is a 344-residue protein sequence, read N- to C-terminus: Heat-inducible transcription repressor HrcA (344 aa).

The protein belongs to the HrcA family.

Functionally, negative regulator of class I heat shock genes (grpE-dnaK-dnaJ and groELS operons). Prevents heat-shock induction of these operons. In Streptococcus equi subsp. equi (strain 4047), this protein is Heat-inducible transcription repressor HrcA.